We begin with the raw amino-acid sequence, 173 residues long: Protein tyrosine phosphatase type IVA 3 (173 aa).

A Tyrosine-protein phosphatase domain is found at 8–161 (APVEVSYRHM…YRPKQRLRFK (154 aa)). Residues C49 and C104 are joined by a disulfide bond. The Proton donor role is filled by D72. Catalysis depends on C104, which acts as the Phosphocysteine intermediate. R110 serves as a coordination point for substrate. Cysteine methyl ester is present on C170. C170 is lipidated: S-farnesyl cysteine. Positions 171-173 (CVM) are cleaved as a propeptide — removed in mature form.

This sequence belongs to the protein-tyrosine phosphatase family. In terms of assembly, interacts with tubulin. Post-translationally, farnesylated. Farnesylation is required for membrane targeting. Unfarnesylated forms are shifted into the nucleus. Present in the small intestine, where it is located in the differentiated epithelial cells of the villus but not in the proliferating crypt cells (at protein level). Expressed in heart and skeletal muscle, and at lower levels in lung, spleen and testis.

It localises to the cell membrane. It is found in the early endosome. The catalysed reaction is O-phospho-L-tyrosyl-[protein] + H2O = L-tyrosyl-[protein] + phosphate. Inhibited by sodium orthovanadate and peroxovanadium compounds, and by pentamidine. In terms of biological role, protein tyrosine phosphatase which stimulates progression from G1 into S phase during mitosis. Enhances cell proliferation, cell motility and invasive activity, and promotes cancer metastasis. May be involved in the progression of cardiac hypertrophy by inhibiting intracellular calcium mobilization in response to angiotensin II. In Mus musculus (Mouse), this protein is Protein tyrosine phosphatase type IVA 3 (Ptp4a3).